Reading from the N-terminus, the 340-residue chain is Delta-aminolevulinic acid dehydratase (340 aa).

Zn(2+) contacts are provided by Cys-133, Cys-135, and Cys-143. Residue Lys-210 is the Schiff-base intermediate with substrate of the active site. Residues Arg-220 and Arg-232 each contribute to the 5-aminolevulinate site. Lys-263 acts as the Schiff-base intermediate with substrate in catalysis. The 5-aminolevulinate site is built by Ser-290 and Tyr-329.

It belongs to the ALAD family. As to quaternary structure, homooctamer. It depends on Zn(2+) as a cofactor.

The catalysed reaction is 2 5-aminolevulinate = porphobilinogen + 2 H2O + H(+). Its pathway is porphyrin-containing compound metabolism; protoporphyrin-IX biosynthesis; coproporphyrinogen-III from 5-aminolevulinate: step 1/4. Catalyzes an early step in the biosynthesis of tetrapyrroles. Binds two molecules of 5-aminolevulinate per subunit, each at a distinct site, and catalyzes their condensation to form porphobilinogen. The polypeptide is Delta-aminolevulinic acid dehydratase (HEM2) (Candida glabrata (strain ATCC 2001 / BCRC 20586 / JCM 3761 / NBRC 0622 / NRRL Y-65 / CBS 138) (Yeast)).